Consider the following 185-residue polypeptide: Segregation and condensation protein B (185 aa).

This sequence belongs to the ScpB family. Homodimer. Homodimerization may be required to stabilize the binding of ScpA to the Smc head domains. Component of a cohesin-like complex composed of ScpA, ScpB and the Smc homodimer, in which ScpA and ScpB bind to the head domain of Smc. The presence of the three proteins is required for the association of the complex with DNA.

Its subcellular location is the cytoplasm. Its function is as follows. Participates in chromosomal partition during cell division. May act via the formation of a condensin-like complex containing Smc and ScpA that pull DNA away from mid-cell into both cell halves. This chain is Segregation and condensation protein B, found in Carboxydothermus hydrogenoformans (strain ATCC BAA-161 / DSM 6008 / Z-2901).